A 397-amino-acid polypeptide reads, in one-letter code: MSKIIAINAGSSSLKFQLFEMPSETVLTKGLVERIGLEDSIFTITVNGEKQKEITNIPDHAVAVNMLLKKLTENGIVKSLDEIGGIGHRVVHGGEKFADSVLIDAEVLADIEELSDLAPLHNPANLVGIKAFQEVLPNVPAVAVFDTAFHQTMPESAFLYSLPYEYYEKFGIRKYGFHGTSHKYVTERAAELLGRPIESLSLLSCHLGNGASIAAVEGGKSIDTSMGFTPLAGVTMGTRSGNIDPALIPYIMEKTGQTVEEVVSVLNKKSGMLGLTGYSSDLRDIIAKEEEGDHRAKVALDVFVSRIHKYIGSYTARMKGVDAIIFTAGVGENSAIIRERVLEGLEYMGVYFDVKRNNVFGEEAFISFPHSPVKIIVIPTDEEVMIARDVLRLGDIG.

Asn-8 contributes to the Mg(2+) binding site. Lys-15 serves as a coordination point for ATP. Residue Arg-89 coordinates substrate. Catalysis depends on Asp-146, which acts as the Proton donor/acceptor. Residues 206-210 (HLGNG), 281-283 (DLR), and 329-333 (GVGEN) contribute to the ATP site. Glu-382 is a Mg(2+) binding site.

Belongs to the acetokinase family. Homodimer. Mg(2+) serves as cofactor. Requires Mn(2+) as cofactor.

Its subcellular location is the cytoplasm. The enzyme catalyses acetate + ATP = acetyl phosphate + ADP. It participates in metabolic intermediate biosynthesis; acetyl-CoA biosynthesis; acetyl-CoA from acetate: step 1/2. In terms of biological role, catalyzes the formation of acetyl phosphate from acetate and ATP. Can also catalyze the reverse reaction. The polypeptide is Acetate kinase (Bacillus mycoides (strain KBAB4) (Bacillus weihenstephanensis)).